Here is a 248-residue protein sequence, read N- to C-terminus: 5'-nucleotidase SurE (248 aa).

A divalent metal cation is bound by residues aspartate 8, aspartate 9, serine 39, and asparagine 91.

Belongs to the SurE nucleotidase family. A divalent metal cation serves as cofactor.

Its subcellular location is the cytoplasm. The enzyme catalyses a ribonucleoside 5'-phosphate + H2O = a ribonucleoside + phosphate. Its function is as follows. Nucleotidase that shows phosphatase activity on nucleoside 5'-monophosphates. In Neisseria meningitidis serogroup C / serotype 2a (strain ATCC 700532 / DSM 15464 / FAM18), this protein is 5'-nucleotidase SurE.